Consider the following 145-residue polypeptide: Transcriptional regulator MraZ (145 aa).

SpoVT-AbrB domains follow at residues 5–50 and 81–124; these read TFNH…ALPQ and AHEV…DKAA.

The protein belongs to the MraZ family. In terms of assembly, forms oligomers.

The protein resides in the cytoplasm. It is found in the nucleoid. The sequence is that of Transcriptional regulator MraZ from Anaeromyxobacter sp. (strain Fw109-5).